The chain runs to 130 residues: Small ribosomal subunit protein uS9 (130 aa).

It belongs to the universal ribosomal protein uS9 family.

In Azotobacter vinelandii (strain DJ / ATCC BAA-1303), this protein is Small ribosomal subunit protein uS9.